The chain runs to 286 residues: 33 kDa chaperonin (286 aa).

Cystine bridges form between Cys-225/Cys-227 and Cys-258/Cys-261.

This sequence belongs to the HSP33 family. Under oxidizing conditions two disulfide bonds are formed involving the reactive cysteines. Under reducing conditions zinc is bound to the reactive cysteines and the protein is inactive.

The protein localises to the cytoplasm. Its function is as follows. Redox regulated molecular chaperone. Protects both thermally unfolding and oxidatively damaged proteins from irreversible aggregation. Plays an important role in the bacterial defense system toward oxidative stress. In Shewanella frigidimarina (strain NCIMB 400), this protein is 33 kDa chaperonin.